The sequence spans 346 residues: Formimidoylglutamase (346 aa).

Positions 145, 180, 182, 184, 271, and 273 each coordinate Mn(2+).

This sequence belongs to the arginase family. Requires Mn(2+) as cofactor.

The catalysed reaction is N-formimidoyl-L-glutamate + H2O = formamide + L-glutamate. The protein operates within amino-acid degradation; L-histidine degradation into L-glutamate; L-glutamate from N-formimidoyl-L-glutamate (hydrolase route): step 1/1. Catalyzes the conversion of N-formimidoyl-L-glutamate to L-glutamate and formamide. The sequence is that of Formimidoylglutamase from Psychrobacter cryohalolentis (strain ATCC BAA-1226 / DSM 17306 / VKM B-2378 / K5).